A 194-amino-acid chain; its full sequence is NAD(P)H:quinone oxidoreductase (194 aa).

This sequence belongs to the SsuE family. As to quaternary structure, homotetramer. The cofactor is FMN.

It carries out the reaction a quinone + NADH + H(+) = a quinol + NAD(+). The catalysed reaction is a quinone + NADPH + H(+) = a quinol + NADP(+). In terms of biological role, the enzyme apparently serves as a quinone reductase in connection with conjugation reactions of hydroquinones involved in detoxification pathways. This is NAD(P)H:quinone oxidoreductase from Solanum tuberosum (Potato).